The primary structure comprises 383 residues: S-adenosylmethionine synthase (383 aa).

Histidine 16 contributes to the ATP binding site. Aspartate 18 contacts Mg(2+). Position 44 (glutamate 44) interacts with K(+). 2 residues coordinate L-methionine: glutamate 57 and glutamine 98. The segment at 98-108 (QSPDIAMGVDI) is flexible loop. Residues 158 to 160 (DQK), 226 to 227 (RF), aspartate 235, 241 to 242 (RK), alanine 258, and lysine 262 each bind ATP. Aspartate 235 lines the L-methionine pocket. Lysine 266 provides a ligand contact to L-methionine.

Belongs to the AdoMet synthase family. Homotetramer; dimer of dimers. Requires Mg(2+) as cofactor. K(+) serves as cofactor.

The protein resides in the cytoplasm. It catalyses the reaction L-methionine + ATP + H2O = S-adenosyl-L-methionine + phosphate + diphosphate. It participates in amino-acid biosynthesis; S-adenosyl-L-methionine biosynthesis; S-adenosyl-L-methionine from L-methionine: step 1/1. Its function is as follows. Catalyzes the formation of S-adenosylmethionine (AdoMet) from methionine and ATP. The overall synthetic reaction is composed of two sequential steps, AdoMet formation and the subsequent tripolyphosphate hydrolysis which occurs prior to release of AdoMet from the enzyme. In Fusobacterium nucleatum subsp. nucleatum (strain ATCC 25586 / DSM 15643 / BCRC 10681 / CIP 101130 / JCM 8532 / KCTC 2640 / LMG 13131 / VPI 4355), this protein is S-adenosylmethionine synthase.